A 259-amino-acid polypeptide reads, in one-letter code: 5'-nucleotidase SurE (259 aa).

Residues aspartate 8, aspartate 9, serine 40, and asparagine 92 each coordinate a divalent metal cation.

The protein belongs to the SurE nucleotidase family. Requires a divalent metal cation as cofactor.

The protein localises to the cytoplasm. It catalyses the reaction a ribonucleoside 5'-phosphate + H2O = a ribonucleoside + phosphate. Functionally, nucleotidase that shows phosphatase activity on nucleoside 5'-monophosphates. The protein is 5'-nucleotidase SurE of Xanthomonas campestris pv. campestris (strain 8004).